The sequence spans 389 residues: S-adenosylmethionine synthase (389 aa).

H16 serves as a coordination point for ATP. Residue D18 participates in Mg(2+) binding. Residue E44 coordinates K(+). L-methionine-binding residues include E57 and Q101. The tract at residues 101–111 (QSVDIAQGVNE) is flexible loop. Residues 168 to 170 (DAK), 234 to 235 (RF), D243, 249 to 250 (RK), A266, and K270 contribute to the ATP site. An L-methionine-binding site is contributed by D243. K274 contacts L-methionine.

It belongs to the AdoMet synthase family. As to quaternary structure, homotetramer; dimer of dimers. Requires Mg(2+) as cofactor. It depends on K(+) as a cofactor.

It is found in the cytoplasm. It carries out the reaction L-methionine + ATP + H2O = S-adenosyl-L-methionine + phosphate + diphosphate. Its pathway is amino-acid biosynthesis; S-adenosyl-L-methionine biosynthesis; S-adenosyl-L-methionine from L-methionine: step 1/1. Catalyzes the formation of S-adenosylmethionine (AdoMet) from methionine and ATP. The overall synthetic reaction is composed of two sequential steps, AdoMet formation and the subsequent tripolyphosphate hydrolysis which occurs prior to release of AdoMet from the enzyme. This is S-adenosylmethionine synthase from Magnetococcus marinus (strain ATCC BAA-1437 / JCM 17883 / MC-1).